A 298-amino-acid polypeptide reads, in one-letter code: Ribosomal RNA processing protein 36 homolog (298 aa).

Positions 1-131 (MKPDIIKKRR…SDAPVEMTAM (131 aa)) are disordered. Residues 14–56 (SDDEDEYNEEDEMYEDDNNNYEEDEDDDDDDDEDDEDDDENEE) show a composition bias toward acidic residues. Polar residues-rich tracts occupy residues 61–70 (QQLSNVSFSS) and 83–92 (LNLNTITKNL). Coiled-coil stretches lie at residues 88 to 112 (ITKN…MNSK) and 196 to 228 (RERD…KNKL). The span at 98-111 (FKKEEQQEKEEMNS) shows a compositional bias: basic and acidic residues. The tract at residues 279–298 (ISSKEKTFLPQRRSFDQDEN) is disordered.

This sequence belongs to the RRP36 family.

The protein localises to the nucleus. It localises to the nucleolus. In terms of biological role, involved in the early processing steps of the pre-rRNA in the maturation pathway leading to the 18S rRNA. This chain is Ribosomal RNA processing protein 36 homolog, found in Dictyostelium discoideum (Social amoeba).